Consider the following 352-residue polypeptide: Homoserine O-acetyltransferase (352 aa).

In terms of domain architecture, AB hydrolase-1 spans 37 to 330 (NAVLVCHALT…APHGHDTFLI (294 aa)). Catalysis depends on Ser-133, which acts as the Nucleophile. Arg-206 serves as a coordination point for substrate. Catalysis depends on residues Asp-296 and His-325. Asp-326 provides a ligand contact to substrate.

The protein belongs to the AB hydrolase superfamily. MetX family. Homodimer.

The protein localises to the cytoplasm. The enzyme catalyses L-homoserine + acetyl-CoA = O-acetyl-L-homoserine + CoA. The protein operates within amino-acid biosynthesis; L-methionine biosynthesis via de novo pathway; O-acetyl-L-homoserine from L-homoserine: step 1/1. In terms of biological role, transfers an acetyl group from acetyl-CoA to L-homoserine, forming acetyl-L-homoserine. This Salinibacter ruber (strain DSM 13855 / M31) protein is Homoserine O-acetyltransferase.